A 571-amino-acid polypeptide reads, in one-letter code: Glutamate--tRNA ligase (571 aa).

A 'HIGH' region motif is present at residues 114-124; that stretch reads PNPNGPWHVGH. The disordered stretch occupies residues 431–453; that stretch reads KPLAGGPESASPPLHPNDEDRGR.

This sequence belongs to the class-I aminoacyl-tRNA synthetase family. Glutamate--tRNA ligase type 2 subfamily.

Its subcellular location is the cytoplasm. The catalysed reaction is tRNA(Glu) + L-glutamate + ATP = L-glutamyl-tRNA(Glu) + AMP + diphosphate. Its function is as follows. Catalyzes the attachment of glutamate to tRNA(Glu) in a two-step reaction: glutamate is first activated by ATP to form Glu-AMP and then transferred to the acceptor end of tRNA(Glu). This chain is Glutamate--tRNA ligase, found in Natronomonas pharaonis (strain ATCC 35678 / DSM 2160 / CIP 103997 / JCM 8858 / NBRC 14720 / NCIMB 2260 / Gabara) (Halobacterium pharaonis).